Here is a 300-residue protein sequence, read N- to C-terminus: Acetylglutamate kinase (300 aa).

Substrate-binding positions include glycine 69 to glycine 70, arginine 91, and asparagine 197.

Belongs to the acetylglutamate kinase family. ArgB subfamily.

The protein localises to the cytoplasm. The catalysed reaction is N-acetyl-L-glutamate + ATP = N-acetyl-L-glutamyl 5-phosphate + ADP. It participates in amino-acid biosynthesis; L-arginine biosynthesis; N(2)-acetyl-L-ornithine from L-glutamate: step 2/4. Its function is as follows. Catalyzes the ATP-dependent phosphorylation of N-acetyl-L-glutamate. In Kineococcus radiotolerans (strain ATCC BAA-149 / DSM 14245 / SRS30216), this protein is Acetylglutamate kinase.